The primary structure comprises 173 residues: dCTP deaminase (173 aa).

DCTP is bound by residues 97-102 (RSSFAR) and aspartate 113. Glutamate 123 acts as the Proton donor/acceptor in catalysis. DCTP is bound by residues tyrosine 155 and glutamine 162.

It belongs to the dCTP deaminase family. In terms of assembly, homotrimer.

It carries out the reaction dCTP + H2O + H(+) = dUTP + NH4(+). Its pathway is pyrimidine metabolism; dUMP biosynthesis; dUMP from dCTP (dUTP route): step 1/2. Its function is as follows. Catalyzes the deamination of dCTP to dUTP. This chain is dCTP deaminase, found in Acidianus ambivalens (Desulfurolobus ambivalens).